A 733-amino-acid polypeptide reads, in one-letter code: Catalase-peroxidase (733 aa).

The disordered stretch occupies residues 1-25 (MNEERKCPITGATHKPSAEKGRSNH). The span at 16–25 (PSAEKGRSNH) shows a compositional bias: basic and acidic residues. The tryptophyl-tyrosyl-methioninium (Trp-Tyr) (with M-245) cross-link spans 96–219 (WHSAGTYRTS…LAAVQMGLIY (124 aa)). His97 functions as the Proton acceptor in the catalytic mechanism. Positions 219–245 (YVNPEGPNGKPDPLAAAKDIRETFARM) form a cross-link, tryptophyl-tyrosyl-methioninium (Tyr-Met) (with W-96). A heme b-binding site is contributed by His260.

It belongs to the peroxidase family. Peroxidase/catalase subfamily. In terms of assembly, homodimer or homotetramer. Heme b serves as cofactor. Formation of the three residue Trp-Tyr-Met cross-link is important for the catalase, but not the peroxidase activity of the enzyme.

It catalyses the reaction H2O2 + AH2 = A + 2 H2O. It carries out the reaction 2 H2O2 = O2 + 2 H2O. Bifunctional enzyme with both catalase and broad-spectrum peroxidase activity. This is Catalase-peroxidase from Chlorobium chlorochromatii (strain CaD3).